A 433-amino-acid chain; its full sequence is C2H2 type master regulator of conidiophore development brlA (433 aa).

Disordered stretches follow at residues 23 to 64 (PSEC…SHYH) and 240 to 265 (KTHT…PVSR). Residues 30-48 (TSSFSPLDSPTPTPTSLYS) show a composition bias toward low complexity. Polar residues predominate over residues 240–264 (KTHTPSTPHRSVSMGTPSGSDTPVS). C2H2-type zinc fingers lie at residues 321-345 (FKCK…MKSH) and 351-376 (HVCW…TKTH). Positions 391 to 416 (ETSQDFDPDFRGQLTPDGRPIYGSKL) are disordered.

It is found in the nucleus. In terms of biological role, brlA, abaA and wetA are pivotal regulators of conidiophore development and conidium maturation. They act individually and together to regulate their own expression and that of numerous other sporulation-specific genes. Binds promoters of target genes at brlA response elements (BREs) containing the conserved sequence 5'-(C/A)(A/G)AGGG(G/A)-3'. Is not required for penicillin V production. This chain is C2H2 type master regulator of conidiophore development brlA, found in Penicillium rubens (strain ATCC 28089 / DSM 1075 / NRRL 1951 / Wisconsin 54-1255) (Penicillium chrysogenum).